Reading from the N-terminus, the 24-residue chain is Superoxide dismutase [Cu-Zn], chloroplastic (24 aa).

Belongs to the Cu-Zn superoxide dismutase family. Homodimer. Cu cation serves as cofactor. It depends on Zn(2+) as a cofactor.

Its subcellular location is the plastid. The protein localises to the chloroplast. It carries out the reaction 2 superoxide + 2 H(+) = H2O2 + O2. Functionally, destroys radicals which are normally produced within the cells and which are toxic to biological systems. The sequence is that of Superoxide dismutase [Cu-Zn], chloroplastic from Picea abies (Norway spruce).